We begin with the raw amino-acid sequence, 314 residues long: Methionyl-tRNA formyltransferase (314 aa).

110 to 113 (SLLP) serves as a coordination point for (6S)-5,6,7,8-tetrahydrofolate.

This sequence belongs to the Fmt family.

It carries out the reaction L-methionyl-tRNA(fMet) + (6R)-10-formyltetrahydrofolate = N-formyl-L-methionyl-tRNA(fMet) + (6S)-5,6,7,8-tetrahydrofolate + H(+). Functionally, attaches a formyl group to the free amino group of methionyl-tRNA(fMet). The formyl group appears to play a dual role in the initiator identity of N-formylmethionyl-tRNA by promoting its recognition by IF2 and preventing the misappropriation of this tRNA by the elongation apparatus. In Bacillus anthracis (strain A0248), this protein is Methionyl-tRNA formyltransferase.